The following is a 673-amino-acid chain: tRNA 5-methylaminomethyl-2-thiouridine biosynthesis bifunctional protein MnmC (673 aa).

Residues 1–245 (MSHAPIQTAA…KREMLIGELP (245 aa)) form a tRNA (mnm(5)s(2)U34)-methyltransferase region. The tract at residues 272-673 (IGGGVASALT…VRKLLKGRAV (402 aa)) is FAD-dependent cmnm(5)s(2)U34 oxidoreductase.

This sequence in the N-terminal section; belongs to the methyltransferase superfamily. tRNA (mnm(5)s(2)U34)-methyltransferase family. It in the C-terminal section; belongs to the DAO family. Requires FAD as cofactor.

It localises to the cytoplasm. It carries out the reaction 5-aminomethyl-2-thiouridine(34) in tRNA + S-adenosyl-L-methionine = 5-methylaminomethyl-2-thiouridine(34) in tRNA + S-adenosyl-L-homocysteine + H(+). Catalyzes the last two steps in the biosynthesis of 5-methylaminomethyl-2-thiouridine (mnm(5)s(2)U) at the wobble position (U34) in tRNA. Catalyzes the FAD-dependent demodification of cmnm(5)s(2)U34 to nm(5)s(2)U34, followed by the transfer of a methyl group from S-adenosyl-L-methionine to nm(5)s(2)U34, to form mnm(5)s(2)U34. The protein is tRNA 5-methylaminomethyl-2-thiouridine biosynthesis bifunctional protein MnmC of Serratia proteamaculans (strain 568).